We begin with the raw amino-acid sequence, 143 residues long: Anti-sigma F factor (143 aa).

It belongs to the anti-sigma-factor family.

It catalyses the reaction L-seryl-[protein] + ATP = O-phospho-L-seryl-[protein] + ADP + H(+). It carries out the reaction L-threonyl-[protein] + ATP = O-phospho-L-threonyl-[protein] + ADP + H(+). In terms of biological role, binds to sigma F and blocks its ability to form an RNA polymerase holoenzyme (E-sigma F). Phosphorylates SpoIIAA on a serine residue. This phosphorylation may enable SpoIIAA to act as an anti-anti-sigma factor that counteracts SpoIIAB and thus releases sigma F from inhibition. The sequence is that of Anti-sigma F factor from Clostridium botulinum (strain Alaska E43 / Type E3).